Here is a 648-residue protein sequence, read N- to C-terminus: ATP-dependent zinc metalloprotease FtsH 4 (648 aa).

Over 1 to 6 the chain is Cytoplasmic; that stretch reads MKQSHK. The helical transmembrane segment at 7-27 threads the bilayer; sequence TLLLWVLLIMMFLAIWQFLSP. The Periplasmic portion of the chain corresponds to 28–111; sequence DSRPATQVAF…VFFEKEDTSP (84 aa). A helical transmembrane segment spans residues 112 to 132; sequence FWPGAIMYLLPTVFLLVMFYL. At 133 to 648 the chain is on the cytoplasmic side; it reads FMRQLQAGGG…FGTPKPAPST (516 aa). An ATP-binding site is contributed by 205–212; it reads GPPGTGKT. His427 contributes to the Zn(2+) binding site. The active site involves Glu428. Zn(2+) is bound by residues His431 and Asp504. The segment at 622 to 648 is disordered; sequence YSDRDRAAKEKRRAASIFGTPKPAPST.

It in the central section; belongs to the AAA ATPase family. This sequence in the C-terminal section; belongs to the peptidase M41 family. Homohexamer. Zn(2+) is required as a cofactor.

The protein localises to the cell inner membrane. Its function is as follows. Acts as a processive, ATP-dependent zinc metallopeptidase for both cytoplasmic and membrane proteins. Plays a role in the quality control of integral membrane proteins. In Sorangium cellulosum (strain So ce56) (Polyangium cellulosum (strain So ce56)), this protein is ATP-dependent zinc metalloprotease FtsH 4.